Here is a 124-residue protein sequence, read N- to C-terminus: Apolipoprotein C-IV (124 aa).

Positions 1–27 are cleaved as a signal peptide; sequence MSLLRCRPRDLPSVSLSVLFLVSFVAS. N107 is a glycosylation site (N-linked (GlcNAc...) asparagine).

The protein belongs to the apolipoprotein C4 family. As to expression, expressed by the liver and secreted in plasma.

The protein localises to the secreted. In terms of biological role, may participate in lipoprotein metabolism. The chain is Apolipoprotein C-IV (Apoc4) from Mus musculus (Mouse).